A 480-amino-acid chain; its full sequence is Aspartyl/glutamyl-tRNA(Asn/Gln) amidotransferase subunit B (480 aa).

Belongs to the GatB/GatE family. GatB subfamily. Heterotrimer of A, B and C subunits.

It carries out the reaction L-glutamyl-tRNA(Gln) + L-glutamine + ATP + H2O = L-glutaminyl-tRNA(Gln) + L-glutamate + ADP + phosphate + H(+). It catalyses the reaction L-aspartyl-tRNA(Asn) + L-glutamine + ATP + H2O = L-asparaginyl-tRNA(Asn) + L-glutamate + ADP + phosphate + 2 H(+). In terms of biological role, allows the formation of correctly charged Asn-tRNA(Asn) or Gln-tRNA(Gln) through the transamidation of misacylated Asp-tRNA(Asn) or Glu-tRNA(Gln) in organisms which lack either or both of asparaginyl-tRNA or glutaminyl-tRNA synthetases. The reaction takes place in the presence of glutamine and ATP through an activated phospho-Asp-tRNA(Asn) or phospho-Glu-tRNA(Gln). The chain is Aspartyl/glutamyl-tRNA(Asn/Gln) amidotransferase subunit B from Streptococcus pneumoniae serotype 2 (strain D39 / NCTC 7466).